The following is a 327-amino-acid chain: MKIAVDVMGGDRAPDEILKGALLASKELESEIVLVGPREIVENAGLSFVETTEVVNMDDPPLEVLRKKDSSMHVGLKLVAEGKVDAFVSAGATGPLFLGATSIVGKIKGVERPALGVAVPSLKGFTVLIDAGANAKVRPEHLLDFSLMGIAYARVLGVESPRVGLLNIGSEENKGHEDLRKAFSLLKEHLGDNFYGNVEGHDINLGTVHVVVTDGFSGNVALKTMEGTAKLITSVMKESIKEGGLFSLIGAFLMKKSFDRMRERLDPRTYGGTFILGIRGIVVKAHGSSDAKAIRHAIRVAERGIRMNLVREIERGIPHVRNSGDGR.

This sequence belongs to the PlsX family. Homodimer. Probably interacts with PlsY.

It localises to the cytoplasm. The catalysed reaction is a fatty acyl-[ACP] + phosphate = an acyl phosphate + holo-[ACP]. It participates in lipid metabolism; phospholipid metabolism. In terms of biological role, catalyzes the reversible formation of acyl-phosphate (acyl-PO(4)) from acyl-[acyl-carrier-protein] (acyl-ACP). This enzyme utilizes acyl-ACP as fatty acyl donor, but not acyl-CoA. This Thermotoga neapolitana (strain ATCC 49049 / DSM 4359 / NBRC 107923 / NS-E) protein is Phosphate acyltransferase.